The sequence spans 420 residues: Exodeoxyribonuclease 7 large subunit (420 aa).

Belongs to the XseA family. In terms of assembly, heterooligomer composed of large and small subunits.

It is found in the cytoplasm. The enzyme catalyses Exonucleolytic cleavage in either 5'- to 3'- or 3'- to 5'-direction to yield nucleoside 5'-phosphates.. Functionally, bidirectionally degrades single-stranded DNA into large acid-insoluble oligonucleotides, which are then degraded further into small acid-soluble oligonucleotides. The sequence is that of Exodeoxyribonuclease 7 large subunit from Helicobacter pylori (strain ATCC 700392 / 26695) (Campylobacter pylori).